The sequence spans 199 residues: Putative acetyltransferase SAR2635 (199 aa).

This sequence belongs to the transferase hexapeptide repeat family.

This Staphylococcus aureus (strain MRSA252) protein is Putative acetyltransferase SAR2635.